Here is a 404-residue protein sequence, read N- to C-terminus: Plasma serine protease inhibitor (404 aa).

The N-terminal stretch at 1–19 (MRLCLFLCLVLLGPRMATL) is a signal peptide. A propeptide spans 20 to 24 (RRSQK) (removed in mature form). 2 O-linked (GalNAc...) threonine glycosylation sites follow: Thr35 and Thr36. Asn245, Asn258, and Asn334 each carry an N-linked (GlcNAc...) asparagine glycan.

Belongs to the serpin family. In terms of assembly, forms protease inhibiting heterodimers in extracellular body fluids with serine proteases such as activated protein C/coagulation factor V/F5, acrosin/ACR, chymotrypsinogen B/CTRB1, prothrombin/F2, factor Xa/F10, factor XI/F11, kallikrein/KLKB1, tissue kallikrein, trypsin/PRSS1, prostate specific antigen/KLK3, tissue plasminogen activator/PLAT and urinary plasminogen activator/PLAU. Forms membrane-anchored serine proteases inhibiting heterodimers with TMPRSS7 and TMPRSS11E. Interacts with SEMG2. Post-translationally, N-glycosylated; glycans consist of a mixture of sialylated bi- (including sialyl-Lewis X epitopes), tri- and tetra-antennary complex-type chains; affects the maximal heparin- and thrombomodulin-enhanced rates of thrombin inhibition. O-glycosylated; further modified with 2 sialic acid residues. Proteolytically cleaved at the N-terminus; inhibits slightly the heparin- and thrombomodulin-enhanced rates of thrombin inhibition. N- and O-glycosylated. In terms of processing, proteolytically cleaved. Inhibition of proteases is accompanied by formation of a stable enzyme-inhibitor complex and by degradation of the serpin to lower molecular weight derivatives. In terms of tissue distribution, expressed strongly in the liver, and moderately in the kidney and testis, but not in other tissues tested.

The protein resides in the secreted. It localises to the extracellular space. With respect to regulation, its inhibitory activity is greatly enhanced in the presence of glycosaminoglycans, heparin, thrombomodulin and phospholipids vesicles. In terms of biological role, heparin-dependent serine protease inhibitor acting in body fluids and secretions. Inactivates serine proteases by binding irreversibly to their serine activation site. Involved in the regulation of intravascular and extravascular proteolytic activities. Plays hemostatic roles in the blood plasma. Acts as a procoagulant and pro-inflammatory factor by inhibiting the anticoagulant activated protein C factor as well as the generation of activated protein C factor by the thrombin/thrombomodulin complex. Acts as an anticoagulant factor by inhibiting blood coagulation factors like prothrombin, factor XI, factor Xa, plasma kallikrein and fibrinolytic enzymes such as tissue- and urinary-type plasminogen activators. In seminal plasma, inactivates several serine proteases implicated in the reproductive system. Inhibits the serpin acrosin; indirectly protects component of the male genital tract from being degraded by excessive released acrosin. Inhibits tissue- and urinary-type plasminogen activator, prostate-specific antigen and kallikrein activities; has a control on the sperm motility and fertilization. Inhibits the activated protein C-catalyzed degradation of SEMG1 and SEMG2; regulates the degradation of semenogelin during the process of transfer of spermatozoa from the male reproductive tract into the female tract. In urine, inhibits urinary-type plasminogen activator and kallikrein activities. Inactivates membrane-anchored serine proteases activities such as MPRSS7 and TMPRSS11E. Inhibits urinary-type plasminogen activator-dependent tumor cell invasion and metastasis. May also play a non-inhibitory role in seminal plasma and urine as a hydrophobic hormone carrier by its binding to retinoic acid. The sequence is that of Plasma serine protease inhibitor (SERPINA5) from Bos taurus (Bovine).